The sequence spans 43 residues: DRDSCVDKSQCGKYGYYGQCDECCKKAGERVGTCVYYKCKCNP.

Cystine bridges form between C5–C23, C11–C34, C20–C39, and C24–C41.

It belongs to the ergtoxin family. Gamma-KTx 4 subfamily. In terms of tissue distribution, expressed by the venom gland.

It localises to the secreted. Its function is as follows. Reversibly blocks Kv11/ERG potassium channels. This Centruroides noxius (Mexican scorpion) protein is Potassium channel toxin gamma-KTx 4.11.